Reading from the N-terminus, the 243-residue chain is Tryptophan synthase alpha chain (243 aa).

Catalysis depends on proton acceptor residues glutamate 32 and aspartate 43.

This sequence belongs to the TrpA family. As to quaternary structure, tetramer of two alpha and two beta chains.

The protein resides in the plastid. It localises to the chloroplast. It carries out the reaction (1S,2R)-1-C-(indol-3-yl)glycerol 3-phosphate + L-serine = D-glyceraldehyde 3-phosphate + L-tryptophan + H2O. Its pathway is amino-acid biosynthesis; L-tryptophan biosynthesis; L-tryptophan from chorismate: step 5/5. Functionally, the alpha subunit is responsible for the aldol cleavage of indoleglycerol phosphate to indole and glyceraldehyde 3-phosphate. In Cyanidioschyzon merolae (strain NIES-3377 / 10D) (Unicellular red alga), this protein is Tryptophan synthase alpha chain.